The primary structure comprises 207 residues: Cytochrome c biogenesis ATP-binding export protein CcmA (207 aa).

In terms of domain architecture, ABC transporter spans Leu4–Val207. Gly36–Thr43 provides a ligand contact to ATP.

It belongs to the ABC transporter superfamily. CcmA exporter (TC 3.A.1.107) family. The complex is composed of two ATP-binding proteins (CcmA) and two transmembrane proteins (CcmB).

It is found in the cell inner membrane. The enzyme catalyses heme b(in) + ATP + H2O = heme b(out) + ADP + phosphate + H(+). In terms of biological role, part of the ABC transporter complex CcmAB involved in the biogenesis of c-type cytochromes; once thought to export heme, this seems not to be the case, but its exact role is uncertain. Responsible for energy coupling to the transport system. The protein is Cytochrome c biogenesis ATP-binding export protein CcmA of Shigella dysenteriae serotype 1 (strain Sd197).